The sequence spans 1006 residues: DNA polymerase (1006 aa).

The protein belongs to the DNA polymerase type-B family. In terms of assembly, interacts with OPG148. Component of the Uracil-DNA glycosylase(UDG)-OPG148-polymerase complex; OPG148 and OPG116/UDG form a heterodimeric processivity factor that associates with OPG071 to form the processive polymerase holoenzyme.

The catalysed reaction is DNA(n) + a 2'-deoxyribonucleoside 5'-triphosphate = DNA(n+1) + diphosphate. Its function is as follows. Catalyzes DNA synthesis. Acquires processivity by associating with a heterodimeric processivity factor comprised of the viral OPG148 and OPG116 proteins, thereby forming the DNA polymerase holoenzyme. Displays 3'- to 5' exonuclease activity. Might participate in viral DNA recombination. Does not perform OPG116/D4synthesis across an abasic site. The chain is DNA polymerase (OPG071) from Homo sapiens (Human).